A 243-amino-acid polypeptide reads, in one-letter code: Terpene cyclase nodB (243 aa).

A run of 3 helical transmembrane segments spans residues 19-39 (ISDI…AGMI), 50-70 (MAPL…LIYP), and 75-95 (IEQG…YTAI). N-linked (GlcNAc...) asparagine glycosylation occurs at asparagine 111. The next 4 membrane-spanning stretches (helical) occupy residues 112–132 (ITLI…ALAA), 134–154 (IGPA…LSVG), 169–189 (SYTL…FAIL), and 205–225 (LVLW…ICLW).

It belongs to the paxB family.

It is found in the membrane. It participates in secondary metabolite biosynthesis. Functionally, terpene cyclase; part of the gene cluster that mediates the biosynthesis of the indole diterpenes nodulisporic acids (NA). Nodulisporic acid A (NAA) and its chemically modified derivatives are of particular significance because of their highly potent insecticidal activity against blood-feeding arthropods and lack of observable adverse effects on mammals, in particular the tremogenicity associated with the paspaline-derived IDTs is not observed. The geranylgeranyl diphosphate (GGPP) synthase ggs1, localized outside of the cluster, is proposed to catalyze the first step in nodulisporic acid biosynthesis via conversion of farnesyl pyrophosphate and isopentyl pyrophosphate into geranylgeranyl pyrophosphate (GGPP). Condensation of indole-3-glycerol phosphate with GGPP by the prenyl transferase nodC then forms 3-geranylgeranylindole (3-GGI). Epoxidation by the FAD-dependent monooxygenase nodM leads to a single-epoxidized-GGI that is substrate of the terpene cyclase nodB for cyclization to yield emindole SB. The terminal methyl carbon, C28, of emindole SB is then oxidized by the cytochrome P450 monooxygenase nodW to produce nodulisporic acid F (NAF), the pentacyclic core of NAA. NAF is converted to nodulisporic acid E (NAE) via prenylation. This step is probably performed by one of the indole diterpene prenyltransferases nodD1 or nodD2. Several oxidation steps performed by the FAD-linked oxidoreductase nodO and one of the cytochrome P450 monooxygenase nodR, nodX or nodZ further convert NAE to nodulisporic acid D (NAD). NAD is substrate of cytochrome P450 monooxygenase nodJ to produce the precursor of nodulisporic acid C (NAC), converted to NAC by one of the indole diterpene prenyltransferases nodD1 or nodD2. The FAD-dependent monooxygenase nodY2 then oxidizes NAC to nodulisporic acid B (NAB). Finally NAB is converted to NAA by one of the cytochrome P450 monooxygenases nodR, nodX or nodZ. The sequence is that of Terpene cyclase nodB from Hypoxylon pulicicidum.